The sequence spans 135 residues: Probable transporter XF_0766 (135 aa).

The next 4 membrane-spanning stretches (helical) occupy residues 4–24 (YWYPILGGILLGLSTVMLLLL), 45–65 (AQDIPFVVGLVLGPLVFSVIF), 71–91 (VTVAATWPTIIVAGLLVGLGT), and 114–134 (IVATAIFLISGMATATFMGVY).

This sequence belongs to the TsuA/YedE (TC 9.B.102) family.

Its subcellular location is the cell inner membrane. In Xylella fastidiosa (strain 9a5c), this protein is Probable transporter XF_0766.